A 339-amino-acid polypeptide reads, in one-letter code: NADH-quinone oxidoreductase subunit H (339 aa).

Transmembrane regions (helical) follow at residues 9–29 (IFPL…LILC), 50–70 (PNVV…KLLF), 82–102 (ILFI…WAVI), 115–135 (VGVL…IIAG), 161–181 (MGLV…SEII), 187–207 (MPWW…ISVL), 235–255 (MGFA…SAMT), 275–295 (IPGF…FLWI), and 311–331 (GWKV…SVLV).

This sequence belongs to the complex I subunit 1 family. In terms of assembly, NDH-1 is composed of 14 different subunits. Subunits NuoA, H, J, K, L, M, N constitute the membrane sector of the complex.

Its subcellular location is the cell inner membrane. It carries out the reaction a quinone + NADH + 5 H(+)(in) = a quinol + NAD(+) + 4 H(+)(out). Functionally, NDH-1 shuttles electrons from NADH, via FMN and iron-sulfur (Fe-S) centers, to quinones in the respiratory chain. The immediate electron acceptor for the enzyme in this species is believed to be ubiquinone. Couples the redox reaction to proton translocation (for every two electrons transferred, four hydrogen ions are translocated across the cytoplasmic membrane), and thus conserves the redox energy in a proton gradient. This subunit may bind ubiquinone. The chain is NADH-quinone oxidoreductase subunit H from Rickettsia peacockii (strain Rustic).